Here is a 1755-residue protein sequence, read N- to C-terminus: Transposon Ty1-PR1 Gag-Pol polyprotein (1755 aa).

Composition is skewed to polar residues over residues 1 to 23 (MESQ…SVTS), 48 to 60 (TKAN…TPAS), 71 to 93 (SPQT…MMTQ), and 127 to 152 (QSQF…GNTF). 3 disordered regions span residues 1 to 93 (MESQ…MMTQ), 126 to 173 (PQSQ…RPPP), and 352 to 421 (GSRN…SKST). The span at 153–165 (TDSSSADSDMTST) shows a compositional bias: low complexity. The RNA-binding stretch occupies residues 299–401 (NNGIHINNKV…NSKSKTARAH (103 aa)). A compositionally biased stretch (low complexity) spans 402-418 (NVSTSNNSPSTDNDSIS). Serine 416 is modified (phosphoserine). Aspartate 461 acts as the For protease activity; shared with dimeric partner in catalysis. The interval 583-640 (NVHTSESTRKYPYPFIHRMLAHANAQTIRYSLKNNTITYFNESDVDWSSAIDYQCPDC) is integrase-type zinc finger-like. The Integrase catalytic domain maps to 660 to 835 (NSYEPFQYLH…AGLDISTLLP (176 aa)). Mg(2+) is bound by residues aspartate 671 and aspartate 736. Disordered regions lie at residues 956-1087 (SKAV…ETEK), 1092-1111 (RSPS…NIVP), and 1130-1187 (DLPL…DNET). Over residues 960 to 969 (SPTDSTPPST) the composition is skewed to low complexity. Over residues 1005-1015 (STPQISNIEST) the composition is skewed to polar residues. The segment covering 1038-1053 (ESSHASKSKDFRHSDS) has biased composition (basic and acidic residues). 2 stretches are compositionally biased toward polar residues: residues 1054–1082 (YSEN…QISD) and 1101–1111 (PENNSSHNIVP). A Bipartite nuclear localization signal motif is present at residues 1178-1212 (KKRSLEDNETEIKVSRDTWNTKNMRSLEPPRSKKR). The Reverse transcriptase Ty1/copia-type domain maps to 1338 to 1476 (NNYYITQLDI…DILGLEIKYQ (139 aa)). Mg(2+) contacts are provided by aspartate 1346, aspartate 1427, aspartate 1428, aspartate 1610, glutamate 1652, and aspartate 1685. Residues 1610–1752 (DASYGNQPYY…IKTFKLLTNK (143 aa)) enclose the RNase H Ty1/copia-type domain.

As to quaternary structure, the capsid protein forms a homotrimer, from which the VLPs are assembled. The protease is a homodimer, whose active site consists of two apposed aspartic acid residues. Post-translationally, initially, virus-like particles (VLPs) are composed of the structural unprocessed proteins Gag and Gag-Pol, and also contain the host initiator methionine tRNA (tRNA(i)-Met) which serves as a primer for minus-strand DNA synthesis, and a dimer of genomic Ty RNA. Processing of the polyproteins occurs within the particle and proceeds by an ordered pathway, called maturation. First, the protease (PR) is released by autocatalytic cleavage of the Gag-Pol polyprotein yielding capsid protein p45 and a Pol-p154 precursor protein. This cleavage is a prerequisite for subsequent processing of Pol-p154 at the remaining sites to release the mature structural and catalytic proteins. Maturation takes place prior to the RT reaction and is required to produce transposition-competent VLPs.

The protein resides in the cytoplasm. Its subcellular location is the nucleus. The catalysed reaction is DNA(n) + a 2'-deoxyribonucleoside 5'-triphosphate = DNA(n+1) + diphosphate. It catalyses the reaction Endonucleolytic cleavage to 5'-phosphomonoester.. Capsid protein (CA) is the structural component of the virus-like particle (VLP), forming the shell that encapsulates the retrotransposons dimeric RNA genome. The particles are assembled from trimer-clustered units and there are holes in the capsid shells that allow for the diffusion of macromolecules. CA also has nucleocapsid-like chaperone activity, promoting primer tRNA(i)-Met annealing to the multipartite primer-binding site (PBS), dimerization of Ty1 RNA and initiation of reverse transcription. Functionally, the aspartyl protease (PR) mediates the proteolytic cleavages of the Gag and Gag-Pol polyproteins after assembly of the VLP. In terms of biological role, reverse transcriptase/ribonuclease H (RT) is a multifunctional enzyme that catalyzes the conversion of the retro-elements RNA genome into dsDNA within the VLP. The enzyme displays a DNA polymerase activity that can copy either DNA or RNA templates, and a ribonuclease H (RNase H) activity that cleaves the RNA strand of RNA-DNA heteroduplexes during plus-strand synthesis and hydrolyzes RNA primers. The conversion leads to a linear dsDNA copy of the retrotransposon that includes long terminal repeats (LTRs) at both ends. Its function is as follows. Integrase (IN) targets the VLP to the nucleus, where a subparticle preintegration complex (PIC) containing at least integrase and the newly synthesized dsDNA copy of the retrotransposon must transit the nuclear membrane. Once in the nucleus, integrase performs the integration of the dsDNA into the host genome. The sequence is that of Transposon Ty1-PR1 Gag-Pol polyprotein (TY1B-PR1) from Saccharomyces cerevisiae (strain ATCC 204508 / S288c) (Baker's yeast).